Here is a 56-residue protein sequence, read N- to C-terminus: Large ribosomal subunit protein eL37 (56 aa).

Cysteine 19, cysteine 22, cysteine 34, and cysteine 37 together coordinate Zn(2+). The C4-type zinc-finger motif lies at 19–37 (CRRCGSVSFNVHTKQCTSC).

It belongs to the eukaryotic ribosomal protein eL37 family. The cofactor is Zn(2+).

Its function is as follows. Binds to the 23S rRNA. In Methanosarcina acetivorans (strain ATCC 35395 / DSM 2834 / JCM 12185 / C2A), this protein is Large ribosomal subunit protein eL37 (rpl37e).